Here is a 412-residue protein sequence, read N- to C-terminus: Serine hydroxymethyltransferase (412 aa).

Residues L117 and 121-123 (GHL) contribute to the (6S)-5,6,7,8-tetrahydrofolate site. K226 is subject to N6-(pyridoxal phosphate)lysine.

This sequence belongs to the SHMT family. As to quaternary structure, homodimer. It depends on pyridoxal 5'-phosphate as a cofactor.

It localises to the cytoplasm. The catalysed reaction is (6R)-5,10-methylene-5,6,7,8-tetrahydrofolate + glycine + H2O = (6S)-5,6,7,8-tetrahydrofolate + L-serine. The protein operates within one-carbon metabolism; tetrahydrofolate interconversion. Its pathway is amino-acid biosynthesis; glycine biosynthesis; glycine from L-serine: step 1/1. Functionally, catalyzes the reversible interconversion of serine and glycine with tetrahydrofolate (THF) serving as the one-carbon carrier. This reaction serves as the major source of one-carbon groups required for the biosynthesis of purines, thymidylate, methionine, and other important biomolecules. Also exhibits THF-independent aldolase activity toward beta-hydroxyamino acids, producing glycine and aldehydes, via a retro-aldol mechanism. In Natranaerobius thermophilus (strain ATCC BAA-1301 / DSM 18059 / JW/NM-WN-LF), this protein is Serine hydroxymethyltransferase.